Here is a 228-residue protein sequence, read N- to C-terminus: Putative L-ribulose-5-phosphate 4-epimerase UlaF (228 aa).

Residues 26–27, 43–44, and 72–73 each bind substrate; these read GN, SG, and SS. Zn(2+) is bound by residues aspartate 74, histidine 93, and histidine 95. The active-site Proton donor/acceptor is aspartate 118. Histidine 167 provides a ligand contact to Zn(2+). The Proton donor/acceptor role is filled by tyrosine 225.

Belongs to the aldolase class II family. AraD/FucA subfamily. Zn(2+) serves as cofactor.

The catalysed reaction is L-ribulose 5-phosphate = D-xylulose 5-phosphate. It participates in cofactor degradation; L-ascorbate degradation; D-xylulose 5-phosphate from L-ascorbate: step 4/4. In terms of biological role, catalyzes the isomerization of L-ribulose 5-phosphate to D-xylulose 5-phosphate. Is involved in the anaerobic L-ascorbate utilization. The sequence is that of Putative L-ribulose-5-phosphate 4-epimerase UlaF from Shigella boydii serotype 4 (strain Sb227).